The primary structure comprises 272 residues: Pyridoxal phosphate phosphatase YbhA (272 aa).

D9 acts as the Nucleophile in catalysis. Mg(2+) is bound at residue D9. L10 provides a ligand contact to phosphate. D11 contributes to the Mg(2+) binding site. Residues 43–44 and K200 each bind phosphate; that span reads TG. D223 contributes to the Mg(2+) binding site. N226 is a binding site for phosphate.

It belongs to the HAD-like hydrolase superfamily. CbbY/CbbZ/Gph/YieH family. Mg(2+) is required as a cofactor. The cofactor is Mn(2+). Requires Co(2+) as cofactor. Zn(2+) serves as cofactor.

The enzyme catalyses pyridoxal 5'-phosphate + H2O = pyridoxal + phosphate. Catalyzes the dephosphorylation of pyridoxal-phosphate (PLP). Can also hydrolyze erythrose-4-phosphate (Ery4P) and fructose-1,6-bis-phosphate (Fru1,6bisP). The chain is Pyridoxal phosphate phosphatase YbhA (ybhA) from Escherichia coli (strain K12).